Reading from the N-terminus, the 521-residue chain is Leucine-rich repeat-containing protein 24 (521 aa).

The signal sequence occupies residues 1-23 (MALRAPTLLLLLLGLLLLPLLPG). The region spanning 24–58 (LPPRATGCPAACRCYSATVECGALRLRVVPPGIPP) is the LRRNT domain. 6 LRR repeats span residues 59 to 80 (GTQT…SLAP), 83 to 104 (ALRH…AFRA), 107 to 128 (RLLE…AFVG), 131 to 152 (QLRV…TFLH), 155 to 176 (RLQE…ALAG), and 179 to 200 (SLAL…ALQP). An N-linked (GlcNAc...) asparagine glycan is attached at N91. The LRRCT domain maps to 212–267 (NPWRCDCALHWLGSWIKEGGRRLLSSRDKKITCAEPPRLALQSLLEVSGGSLICIP). The Ig-like C2-type domain maps to 268-371 (PSVNVEPPEF…ARVPFHLLVN (104 aa)). An intrachain disulfide couples C289 to C353. The tract at residues 306-330 (QPRDGKPQAQAQLEGGAPGLGGHGT) is disordered. N-linked (GlcNAc...) asparagine glycans are attached at residues N342 and N371. The segment at 374–395 (RQQSQQLPDPQAPATRPVGHEP) is disordered. Residues 414–434 (AITAAIALLALTALLLAAMIC) form a helical membrane-spanning segment.

Its subcellular location is the membrane. The protein is Leucine-rich repeat-containing protein 24 (Lrrc24) of Mus musculus (Mouse).